A 71-amino-acid chain; its full sequence is DNA-directed RNA polymerase subunit epsilon (71 aa).

The protein belongs to the RNA polymerase subunit epsilon family. In terms of assembly, RNAP is composed of a core of 2 alpha, a beta and a beta' subunit. The core is associated with a delta subunit, and at least one of epsilon or omega. When a sigma factor is associated with the core the holoenzyme is formed, which can initiate transcription.

The enzyme catalyses RNA(n) + a ribonucleoside 5'-triphosphate = RNA(n+1) + diphosphate. Functionally, a non-essential component of RNA polymerase (RNAP). This chain is DNA-directed RNA polymerase subunit epsilon, found in Staphylococcus carnosus (strain TM300).